Here is a 176-residue protein sequence, read N- to C-terminus: Inorganic pyrophosphatase (176 aa).

The substrate site is built by K30, R44, and Y56. Mg(2+) is bound by residues D66, D71, and D103. Residue Y140 participates in substrate binding.

The protein belongs to the PPase family. In terms of assembly, homohexamer. Mg(2+) serves as cofactor.

It is found in the cytoplasm. It carries out the reaction diphosphate + H2O = 2 phosphate + H(+). Catalyzes the hydrolysis of inorganic pyrophosphate (PPi) forming two phosphate ions. This Methanothermobacter thermautotrophicus (strain ATCC 29096 / DSM 1053 / JCM 10044 / NBRC 100330 / Delta H) (Methanobacterium thermoautotrophicum) protein is Inorganic pyrophosphatase.